Reading from the N-terminus, the 328-residue chain is Diaminopimelate epimerase (328 aa).

Residues Asn14 and Asn73 each contribute to the substrate site. Cys82 serves as the catalytic Proton donor. Residues 83–84 (GN), Asn170, Asn206, and 224–225 (ER) contribute to the substrate site. The active-site Proton acceptor is Cys233. Position 234–235 (234–235 (GT)) interacts with substrate.

Belongs to the diaminopimelate epimerase family. As to quaternary structure, homodimer.

Its subcellular location is the cytoplasm. The enzyme catalyses (2S,6S)-2,6-diaminopimelate = meso-2,6-diaminopimelate. It functions in the pathway amino-acid biosynthesis; L-lysine biosynthesis via DAP pathway; DL-2,6-diaminopimelate from LL-2,6-diaminopimelate: step 1/1. Catalyzes the stereoinversion of LL-2,6-diaminopimelate (L,L-DAP) to meso-diaminopimelate (meso-DAP), a precursor of L-lysine and an essential component of the bacterial peptidoglycan. This Listeria welshimeri serovar 6b (strain ATCC 35897 / DSM 20650 / CCUG 15529 / CIP 8149 / NCTC 11857 / SLCC 5334 / V8) protein is Diaminopimelate epimerase.